A 417-amino-acid chain; its full sequence is Queuine tRNA-ribosyltransferase accessory subunit 2 (417 aa).

Zn(2+)-binding residues include Cys-324, Cys-326, Cys-329, and His-355.

The protein belongs to the queuine tRNA-ribosyltransferase family. QTRT2 subfamily. In terms of assembly, heterodimer of a catalytic subunit and an accessory subunit. Requires Zn(2+) as cofactor.

Its subcellular location is the cytoplasm. Non-catalytic subunit of the queuine tRNA-ribosyltransferase (TGT) that catalyzes the base-exchange of a guanine (G) residue with queuine (Q) at position 34 (anticodon wobble position) in tRNAs with GU(N) anticodons (tRNA-Asp, -Asn, -His and -Tyr), resulting in the hypermodified nucleoside queuosine (7-(((4,5-cis-dihydroxy-2-cyclopenten-1-yl)amino)methyl)-7-deazaguanosine). The sequence is that of Queuine tRNA-ribosyltransferase accessory subunit 2 from Drosophila pseudoobscura pseudoobscura (Fruit fly).